The following is a 139-amino-acid chain: Acidic phospholipase A2 Ts-A4 (139 aa).

Residues 1–16 form the signal peptide; the sequence is MRTLWILAVLLVGVEG. 7 disulfide bridges follow: Cys42-Cys132, Cys44-Cys60, Cys59-Cys111, Cys65-Cys139, Cys66-Cys104, Cys73-Cys97, and Cys91-Cys102. Tyr43, Gly45, and Gly47 together coordinate Ca(2+). His63 is an active-site residue. Asp64 provides a ligand contact to Ca(2+). Asp105 is a catalytic residue.

The cofactor is Ca(2+). In terms of tissue distribution, expressed by the venom gland.

The protein resides in the secreted. It catalyses the reaction a 1,2-diacyl-sn-glycero-3-phosphocholine + H2O = a 1-acyl-sn-glycero-3-phosphocholine + a fatty acid + H(+). Its function is as follows. PLA2 catalyzes the calcium-dependent hydrolysis of the 2-acyl groups in 3-sn-phosphoglycerides. The chain is Acidic phospholipase A2 Ts-A4 from Trimeresurus stejnegeri (Chinese green tree viper).